The sequence spans 71 residues: uncharacterized protein (71 aa).

Residues 5–59 (IKEFRAKFNMTQEELAKRVGVRRETIVFLEKGKYNPSLKLAYKIARVFNAKIEDI) enclose the HTH cro/C1-type domain. A DNA-binding region (H-T-H motif) is located at residues 16–35 (QEELAKRVGVRRETIVFLEK).

This is an uncharacterized protein from Archaeoglobus fulgidus (strain ATCC 49558 / DSM 4304 / JCM 9628 / NBRC 100126 / VC-16).